A 640-amino-acid chain; its full sequence is MELKPNGNHNNNNAAEKSEDTEKAKAERTNWGNGLEFLMSCISVSVGLGNVWRFPFTAYENGGGAFLIPYIIVLFLIGKPMYYLEMIMGQFTSQGTVKIWSICPGFVGVGYGQAFGTICIISYYSSLLALTLYYLFVSFQSELPWSFCREDWQNCVDSRPAEYTENLITGLASNASTLASNLTTPFSNRGVSLLADNETVKLQSSSEIYFLDVVIKEKLDISDGIGSPDWKLTLALLASWVVIFLVIMRGVKSSGKAAYFLALFPYVVLFVLLIRAVTLEGARDGIIFFLQPQWGELLNPTVWKNAVVQCFFSLAVGSGPIIMFASYNRFDHGIYRDAMIVTTLDTLTSLLGGITIFAILGNLAHNLNIENIQDVVRSGTGLAFISYPDAISKFQAVPQLFSVLFFFMLFVLGIGSIVALQSTIVTIICDQFKGLKYWKVALGTSMCGFLMGLVYVTPGGQWILTLVDFYGGTYVVFILAIFELAGIVWIYGLQNFCDDIEFMCNRRVSLYWRMCWSFFTPVMMIIIFIYSMVTIEPIKYSELYFPEAGNVAGWLLFGIGAAQFPLWGLWYVSRHREGSFCSSIMASLKPSEKWGPANAEVKREWQIFKSQKAAQRAVQKESSKLGFFWRKITNFCGSNI.

Over residues 1–13 (MELKPNGNHNNNN) the composition is skewed to low complexity. The disordered stretch occupies residues 1 to 25 (MELKPNGNHNNNNAAEKSEDTEKAK). Topologically, residues 1-30 (MELKPNGNHNNNNAAEKSEDTEKAKAERTN) are cytoplasmic. The segment covering 16 to 25 (EKSEDTEKAK) has biased composition (basic and acidic residues). The next 3 helical transmembrane spans lie at 31 to 51 (WGNG…LGNV), 64 to 84 (GAFL…MYYL), and 117 to 137 (TICI…YLFV). N-linked (GlcNAc...) asparagine glycans are attached at residues Asn174, Asn181, and Asn197. The next 9 membrane-spanning stretches (helical) occupy residues 228–248 (PDWK…LVIM), 257–277 (AAYF…IRAV), 306–326 (AVVQ…MFAS), 340–360 (IVTT…FAIL), 400–420 (LFSV…IVAL), 447–467 (CGFL…LTLV), 473–493 (TYVV…IYGL), 515–535 (CWSF…MVTI), and 551–571 (VAGW…GLWY).

Belongs to the sodium:neurotransmitter symporter (SNF) (TC 2.A.22) family.

It is found in the membrane. In terms of biological role, unusual broad substrate spectrum amino acid:sodium cotransporter that promotes absorption of the D isomers of essential amino acids. Neutral amino acids are the preferred substrates, especially methionine and phenylalanine. This chain is Sodium-dependent nutrient amino acid transporter 1, found in Drosophila ananassae (Fruit fly).